The following is a 426-amino-acid chain: 3-phosphoshikimate 1-carboxyvinyltransferase (426 aa).

Positions 22, 23, and 27 each coordinate 3-phosphoshikimate. Lysine 22 is a binding site for phosphoenolpyruvate. Residues glycine 96 and arginine 124 each coordinate phosphoenolpyruvate. 7 residues coordinate 3-phosphoshikimate: serine 170, serine 171, glutamine 172, serine 198, aspartate 314, asparagine 337, and lysine 341. Position 172 (glutamine 172) interacts with phosphoenolpyruvate. The active-site Proton acceptor is the aspartate 314. Phosphoenolpyruvate is bound by residues arginine 345, arginine 387, and lysine 412.

The protein belongs to the EPSP synthase family. As to quaternary structure, monomer.

It localises to the cytoplasm. The catalysed reaction is 3-phosphoshikimate + phosphoenolpyruvate = 5-O-(1-carboxyvinyl)-3-phosphoshikimate + phosphate. It participates in metabolic intermediate biosynthesis; chorismate biosynthesis; chorismate from D-erythrose 4-phosphate and phosphoenolpyruvate: step 6/7. In terms of biological role, catalyzes the transfer of the enolpyruvyl moiety of phosphoenolpyruvate (PEP) to the 5-hydroxyl of shikimate-3-phosphate (S3P) to produce enolpyruvyl shikimate-3-phosphate and inorganic phosphate. The sequence is that of 3-phosphoshikimate 1-carboxyvinyltransferase from Shewanella baltica (strain OS195).